Consider the following 431-residue polypeptide: Serine hydroxymethyltransferase (431 aa).

Residues Leu121 and 125-127 (GHL) each bind (6S)-5,6,7,8-tetrahydrofolate. Lys230 is subject to N6-(pyridoxal phosphate)lysine. 369-371 (SPF) lines the (6S)-5,6,7,8-tetrahydrofolate pocket.

This sequence belongs to the SHMT family. Homodimer. The cofactor is pyridoxal 5'-phosphate.

The protein localises to the cytoplasm. The catalysed reaction is (6R)-5,10-methylene-5,6,7,8-tetrahydrofolate + glycine + H2O = (6S)-5,6,7,8-tetrahydrofolate + L-serine. It functions in the pathway one-carbon metabolism; tetrahydrofolate interconversion. Its pathway is amino-acid biosynthesis; glycine biosynthesis; glycine from L-serine: step 1/1. Catalyzes the reversible interconversion of serine and glycine with tetrahydrofolate (THF) serving as the one-carbon carrier. This reaction serves as the major source of one-carbon groups required for the biosynthesis of purines, thymidylate, methionine, and other important biomolecules. Also exhibits THF-independent aldolase activity toward beta-hydroxyamino acids, producing glycine and aldehydes, via a retro-aldol mechanism. The chain is Serine hydroxymethyltransferase from Cytophaga hutchinsonii (strain ATCC 33406 / DSM 1761 / CIP 103989 / NBRC 15051 / NCIMB 9469 / D465).